Consider the following 148-residue polypeptide: FAD synthase (148 aa).

ATP-binding positions include Thr14–Phe15, His19–His22, and Asp97.

It belongs to the archaeal FAD synthase family. As to quaternary structure, homodimer. Requires a divalent metal cation as cofactor.

The catalysed reaction is FMN + ATP + H(+) = FAD + diphosphate. It functions in the pathway cofactor biosynthesis; FAD biosynthesis; FAD from FMN: step 1/1. Catalyzes the transfer of the AMP portion of ATP to flavin mononucleotide (FMN) to produce flavin adenine dinucleotide (FAD) coenzyme. In Natrialba magadii (strain ATCC 43099 / DSM 3394 / CCM 3739 / CIP 104546 / IAM 13178 / JCM 8861 / NBRC 102185 / NCIMB 2190 / MS3) (Natronobacterium magadii), this protein is FAD synthase.